The following is an 887-amino-acid chain: CWF19-like protein 2 (887 aa).

A disordered region spans residues 1-143 (MEAFSVRFES…DKRTEEECDS (143 aa)). Residues 11–103 (ASSIEERKEQ…KKQKCQKQSE (93 aa)) adopt a coiled-coil conformation. The span at 14–72 (IEERKEQTRNARAEVLRQAKHNFEKEQRGEERKRLRDEDTWMLPDVHERIEQFSQEHSE) shows a compositional bias: basic and acidic residues. A Phosphoserine modification is found at Ser-71. The span at 73-98 (KKKKKKDKHSKKVKKEKKKKRKKQKC) shows a compositional bias: basic residues. The span at 99-110 (QKQSESTDSSAS) shows a compositional bias: low complexity. Positions 124–143 (SDKEKTWKVKDKRTEEECDS) are enriched in basic and acidic residues. The stretch at 164–254 (SSSLKAEKET…RNFEDIVAEK (91 aa)) forms a coiled coil. Lys-168 participates in a covalent cross-link: Glycyl lysine isopeptide (Lys-Gly) (interchain with G-Cter in SUMO2). Disordered stretches follow at residues 315–370 (LEME…DEDE) and 405–447 (SEES…GRRE). Basic and acidic residues predominate over residues 342–352 (CRRESALRKNQ). Ser-354 and Ser-366 each carry phosphoserine. Residues 414–430 (RSDRRQENRKPSDKKPL) are compositionally biased toward basic and acidic residues. Polar residues predominate over residues 433–442 (WSYNANQHST). Ser-478 bears the Phosphoserine mark. A coiled-coil region spans residues 495-524 (IKAEMMGNMELAEQLKAQLKEANKFKETQM). A Glycyl lysine isopeptide (Lys-Gly) (interchain with G-Cter in SUMO2) cross-link involves residue Lys-597. Ser-622 carries the post-translational modification Phosphoserine.

This sequence belongs to the CWF19 family.

The protein is CWF19-like protein 2 (Cwf19l2) of Mus musculus (Mouse).